The following is a 68-amino-acid chain: Small integral membrane protein 10-like protein 3 (68 aa).

Expressed specifically in salivary glands (at protein level).

This Mus musculus (Mouse) protein is Small integral membrane protein 10-like protein 3.